The following is a 108-amino-acid chain: Beta-defensin 126 (108 aa).

A signal peptide spans 1 to 20 (MKSLLFTLAVFMLLAQLVSG). Residues 21 to 63 (NWYVKKCLNDVGICKKKCKPGEMHIKNGWATCGKQRDCCVPAD) are in vitro binds to LPS, mediates antimicrobial activity and inhibits LPS-mediated inflammation. 3 disulfides stabilise this stretch: C27–C58, C34–C52, and C38–C59.

Belongs to the beta-defensin family. In terms of assembly, homodimer or homooligomer; disulfide-linked. Post-translationally, O-glycosylated; glycans contain alpha(2,3)-linked sialic acids.

Its subcellular location is the secreted. Its function is as follows. Highly glycosylated atypical beta-defensin involved in several aspects of sperm function. Facilitates sperm transport in the female reproductive tract and contributes to sperm protection against immunodetection; both functions are probably implicating the negative surface charge provided by its O-linked oligosaccharides in the sperm glycocalyx. Involved in binding of sperm to oviductal epithelial cells to form a sperm reservoir until ovulation. Release from the sperm surface during capacitation and ovaluation by an elevation of oviductal fluid pH is unmasking other surface components and allows sperm to penetrate the cumulus matrix and bind to the zona pellucida of the oocyte. In vitro has antimicrobial activity and may inhibit LPS-mediated inflammation. This chain is Beta-defensin 126 (DEFB126), found in Pan troglodytes (Chimpanzee).